Reading from the N-terminus, the 302-residue chain is 4-hydroxy-tetrahydrodipicolinate synthase (302 aa).

A pyruvate-binding site is contributed by T55. Y144 serves as the catalytic Proton donor/acceptor. The Schiff-base intermediate with substrate role is filled by K172. Pyruvate is bound at residue V214.

This sequence belongs to the DapA family. Homotetramer; dimer of dimers.

The protein resides in the cytoplasm. It carries out the reaction L-aspartate 4-semialdehyde + pyruvate = (2S,4S)-4-hydroxy-2,3,4,5-tetrahydrodipicolinate + H2O + H(+). It participates in amino-acid biosynthesis; L-lysine biosynthesis via DAP pathway; (S)-tetrahydrodipicolinate from L-aspartate: step 3/4. Its function is as follows. Catalyzes the condensation of (S)-aspartate-beta-semialdehyde [(S)-ASA] and pyruvate to 4-hydroxy-tetrahydrodipicolinate (HTPA). The polypeptide is 4-hydroxy-tetrahydrodipicolinate synthase (Synechococcus sp. (strain WH7803)).